We begin with the raw amino-acid sequence, 372 residues long: Protein-glutamate methylesterase/protein-glutamine glutaminase (372 aa).

Positions 5-123 (RVLIVDDSAL…SANLTTVSET (119 aa)) constitute a Response regulatory domain. Asp56 is modified (4-aspartylphosphate). Residues 140 to 151 (GTRSTDTTNSFS) show a composition bias toward polar residues. The segment at 140–177 (GTRSTDTTNSFSEPFKSTIPKPMTAAEPQKEEKPTPQR) is disordered. Over residues 167-177 (PQKEEKPTPQR) the composition is skewed to basic and acidic residues. The 187-residue stretch at 178-364 (EHGNIQIIAI…VSLDNMAAAI (187 aa)) folds into the CheB-type methylesterase domain. Catalysis depends on residues Ser190, His217, and Asp313.

The protein belongs to the CheB family. Post-translationally, phosphorylated by CheA. Phosphorylation of the N-terminal regulatory domain activates the methylesterase activity.

The protein resides in the cytoplasm. The enzyme catalyses [protein]-L-glutamate 5-O-methyl ester + H2O = L-glutamyl-[protein] + methanol + H(+). The catalysed reaction is L-glutaminyl-[protein] + H2O = L-glutamyl-[protein] + NH4(+). Its function is as follows. Involved in chemotaxis. Part of a chemotaxis signal transduction system that modulates chemotaxis in response to various stimuli. Catalyzes the demethylation of specific methylglutamate residues introduced into the chemoreceptors (methyl-accepting chemotaxis proteins or MCP) by CheR. Also mediates the irreversible deamidation of specific glutamine residues to glutamic acid. The chain is Protein-glutamate methylesterase/protein-glutamine glutaminase from Treponema denticola (strain ATCC 35405 / DSM 14222 / CIP 103919 / JCM 8153 / KCTC 15104).